A 197-amino-acid polypeptide reads, in one-letter code: Holliday junction branch migration complex subunit RuvA (197 aa).

A domain I region spans residues 1–61; it reads MYEYFEGTIT…ENGMTLYGFK (61 aa). The segment at 62–140 is domain II; it reads SQQDKVLFNK…NYVAENLFTE (79 aa). Residues 141–150 are flexible linker; that stretch reads DEPVESVFPA. Residues 150–197 form a domain III region; sequence ALEDALLALGALGYSQKEVDRIKPKLKKLPEMSADEYIKQGLGFLLKK.

It belongs to the RuvA family. As to quaternary structure, homotetramer. Forms an RuvA(8)-RuvB(12)-Holliday junction (HJ) complex. HJ DNA is sandwiched between 2 RuvA tetramers; dsDNA enters through RuvA and exits via RuvB. An RuvB hexamer assembles on each DNA strand where it exits the tetramer. Each RuvB hexamer is contacted by two RuvA subunits (via domain III) on 2 adjacent RuvB subunits; this complex drives branch migration. In the full resolvosome a probable DNA-RuvA(4)-RuvB(12)-RuvC(2) complex forms which resolves the HJ.

The protein resides in the cytoplasm. In terms of biological role, the RuvA-RuvB-RuvC complex processes Holliday junction (HJ) DNA during genetic recombination and DNA repair, while the RuvA-RuvB complex plays an important role in the rescue of blocked DNA replication forks via replication fork reversal (RFR). RuvA specifically binds to HJ cruciform DNA, conferring on it an open structure. The RuvB hexamer acts as an ATP-dependent pump, pulling dsDNA into and through the RuvAB complex. HJ branch migration allows RuvC to scan DNA until it finds its consensus sequence, where it cleaves and resolves the cruciform DNA. The polypeptide is Holliday junction branch migration complex subunit RuvA (Lactobacillus delbrueckii subsp. bulgaricus (strain ATCC BAA-365 / Lb-18)).